The following is a 332-amino-acid chain: Mitochondrial glycine transporter (332 aa).

Solcar repeat units follow at residues 11 to 94 (SSSY…LRQN), 121 to 205 (LSNL…LKKR), and 235 to 319 (TSAS…LIRR). Helical transmembrane passes span 17–42 (FGAGLGSGILSAVLLQPADLLKTRVQ), 69–95 (GTVPSALRTGFGSAIYFTSLNALRQNV), 127–152 (LTTGAVARAGAGFILMPMTIIKVRYE), 180–203 (GFGATAIRDAPYAGLYVLFYEELK), 239–265 (INFGSGVLAAGLATAITNPFDAIKTRI), and 294–312 (GLGLRMGRKAVSSALAWTI).

It belongs to the mitochondrial carrier (TC 2.A.29) family. SLC25A38 subfamily.

Its subcellular location is the mitochondrion inner membrane. The enzyme catalyses glycine(in) = glycine(out). Its function is as follows. Mitochondrial glycine transporter that imports glycine into the mitochondrial matrix. Plays an important role in providing glycine for the first enzymatic step in heme biosynthesis, the condensation of glycine with succinyl-CoA to produce 5-aminolevulinate (ALA) in the mitochondrial matrix. This is Mitochondrial glycine transporter from Botryotinia fuckeliana (strain B05.10) (Noble rot fungus).